We begin with the raw amino-acid sequence, 521 residues long: GRAS family protein RAD1 (521 aa).

One can recognise a GRAS domain in the interval 137 to 520; the sequence is DGSCADGMRL…KPIVAVSCWK (384 aa). The leucine repeat I (LRI) stretch occupies residues 144–212; that stretch reads MRLVQLLIAC…PIGNNSAGSD (69 aa). The VHIID stretch occupies residues 231–301; it reads FKLVYENCPH…HRVRRLRITA (71 aa). Residues 262-266 carry the VHIID motif; that stretch reads LHVVD. A leucine repeat II (LRII) region spans residues 311–343; sequence VIGEELSIYAKNLGIHLEFSIVEKNLENLKPKD. A PFYRE region spans residues 352-443; the sequence is LVVNSILQLH…QFYFAEEIKN (92 aa). The interval 446–520 is SAW; that stretch reads SCEGPLRMER…KPIVAVSCWK (75 aa).

Belongs to the GRAS family. In terms of assembly, interacts with RAM1. Interacts with NSP2.

It localises to the nucleus. In terms of biological role, transcription factor acting as a regulator of arbuscular mycorrhiza (AM)-related genes (e.g. STR). Required for the morphogenesis of arbuscules upon symbiosis with AM fungi (e.g. Glomus versiforme). Also involved in restricting mycorrhizal colonization of the root meristem. This Medicago truncatula (Barrel medic) protein is GRAS family protein RAD1.